The following is a 780-amino-acid chain: MSDGDKNGRDNHEEALVPVEVWQELERAECLARGAALKWASGVFCRPEHLEKLGQYKKRESQRTASIQSRLKSVVQSYLEGVDWGLGQLREARAELRGVSHDLYKANLESRKNSEEVTTLETLREISVSHCQLLAAVSNLPRLYKVRSMVLETERLVESRRLLEAHARLMELERWQDEVLLQLQGPRGSSGTELNSEDEELVRNYFSGVGRLVDALAKELWAVVGSGLSLAHQNPTPFVSAVRIVEREEALDQFFLEERRSTSGHNIPMPAGRPRNWRDRFFKVMEEAVSARFRSVSYLHTRGPGLASHLSALQHCIMGDLSTVRHCLEQCVPAHYHLTRAYLHFCHQFLQTHLGLVSGWELEGGEIFAVLNWVLHIYNSSEMMGEPALLAELEIENLGPLISQEGLEQLQNKYVQKVRKSVSEWMQKALEVELTDWQRDQEPDIDHEGYYHTSLPTIITQMLEENARVALMISEALRDQTIQMGLYEMEKLLSRFRDAVIEFGKEHRKDPTVNKFYLHYLLACINNCIILKTSTESLQQQICSFVSNRYSRIPLGPLAALDRAVRKACRLVMDHLLFELQPHLQELLSSTWLDQGDVTLNMCGVLERHCELYNRVRQPCRQRLKEECQWLTVVEYVRAVMQKRLVCRSSDEQKQLAQRMTQDAQQLRDHLQSMEIDGTIGEVNPTALIAALADIINLKDPGMLLLEISGLLSKYPDISEEHVSVLLDIRGDVPKEVRKSVLDFLDQSAPPLPPGYRPIFTEILVPSSSIPFCLPTAKCT.

Belongs to the SEC6 family.

It is found in the cytoplasmic vesicle. Its subcellular location is the secretory vesicle. Functionally, as part of the exocyst, may play a role in regulated exocytosis. The polypeptide is Exocyst complex component 3-like protein (exoc3l1) (Danio rerio (Zebrafish)).